Reading from the N-terminus, the 352-residue chain is Ion-translocating oxidoreductase complex subunit D (352 aa).

4 helical membrane passes run 20–40 (IMLL…WFFG), 42–62 (GTLV…ALVL), 89–109 (IPPL…AIIA), and 123–143 (PAMI…TSWL). T187 is subject to FMN phosphoryl threonine. A run of 5 helical transmembrane segments spans residues 214 to 234 (ILAG…GLWL), 242 to 262 (WHIP…GWLF), 267 to 287 (LAAP…FFIL), 301 to 321 (LIFG…GGYP), and 322 to 342 (DGVA…DYYT).

This sequence belongs to the NqrB/RnfD family. In terms of assembly, the complex is composed of six subunits: RsxA, RsxB, RsxC, RsxD, RsxE and RsxG. FMN is required as a cofactor.

It localises to the cell inner membrane. In terms of biological role, part of a membrane-bound complex that couples electron transfer with translocation of ions across the membrane. Required to maintain the reduced state of SoxR. This chain is Ion-translocating oxidoreductase complex subunit D, found in Escherichia coli (strain ATCC 8739 / DSM 1576 / NBRC 3972 / NCIMB 8545 / WDCM 00012 / Crooks).